A 486-amino-acid chain; its full sequence is uncharacterized protein (486 aa).

Positions 1-25 are cleaved as a signal peptide; sequence MGTMRSVYLIIIIILFFAFISLSFG. 2 stretches are compositionally biased toward basic and acidic residues: residues 306–316 and 326–349; these read KKEEKENEESS and KKEEKSQTQETKKPSKNEMNKQEK. A disordered region spans residues 306–349; that stretch reads KKEEKENEESSKTINQMQRHKKEEKSQTQETKKPSKNEMNKQEK.

This is an uncharacterized protein from Methanocaldococcus jannaschii (strain ATCC 43067 / DSM 2661 / JAL-1 / JCM 10045 / NBRC 100440) (Methanococcus jannaschii).